Reading from the N-terminus, the 440-residue chain is Probable aldose 1-epimerase ARB_05372 (440 aa).

Residues 1–24 form the signal peptide; the sequence is MCGVLRQLMLLLLAFLSITPSCSA. 5 N-linked (GlcNAc...) asparagine glycosylation sites follow: Asn32, Asn38, Asn43, Asn68, and Asn112. Substrate is bound at residue 125 to 126; that stretch reads NR. Residues Asn129, Asn147, Asn163, Asn171, and Asn199 are each glycosylated (N-linked (GlcNAc...) asparagine). The Proton donor role is filled by His233. N-linked (GlcNAc...) asparagine glycans are attached at residues Asn243, Asn275, Asn281, and Asn306. A substrate-binding site is contributed by Asp311. 4 N-linked (GlcNAc...) asparagine glycosylation sites follow: Asn321, Asn337, Asn365, and Asn385. Glu401 acts as the Proton acceptor in catalysis.

The protein belongs to the aldose epimerase family. In terms of assembly, monomer.

The protein resides in the secreted. It carries out the reaction alpha-D-glucose = beta-D-glucose. Its pathway is carbohydrate metabolism; hexose metabolism. In terms of biological role, mutarotase converts alpha-aldose to the beta-anomer. It is active on D-glucose, L-arabinose, D-xylose, D-galactose, maltose and lactose. The polypeptide is Probable aldose 1-epimerase ARB_05372 (Arthroderma benhamiae (strain ATCC MYA-4681 / CBS 112371) (Trichophyton mentagrophytes)).